The chain runs to 973 residues: EF-hand calcium-binding domain-containing protein 13 (973 aa).

A disordered region spans residues 384 to 448; sequence YSKNGINFKK…HSSLQKQVSS (65 aa). Basic and acidic residues predominate over residues 396–405; it reads EKGEIHDSKS. Low complexity predominate over residues 406 to 418; it reads KPQSLKSSTSLSK. EF-hand domains are found at residues 488-523, 524-559, 633-668, 756-791, 792-827, and 864-899; these read LLDE…ERSF, PECN…FGIY, LKKD…MRDA, PKVN…LNVN, LTEE…SPHF, and TANA…ILTI.

The protein is EF-hand calcium-binding domain-containing protein 13 (EFCAB13) of Homo sapiens (Human).